The chain runs to 55 residues: Large ribosomal subunit protein bL33 (55 aa).

Belongs to the bacterial ribosomal protein bL33 family.

The polypeptide is Large ribosomal subunit protein bL33 (Klebsiella pneumoniae (strain 342)).